Reading from the N-terminus, the 61-residue chain is Large ribosomal subunit protein uL30 (61 aa).

It belongs to the universal ribosomal protein uL30 family. As to quaternary structure, part of the 50S ribosomal subunit.

In Corynebacterium glutamicum (strain R), this protein is Large ribosomal subunit protein uL30.